The primary structure comprises 500 residues: Lysine--tRNA ligase (500 aa).

Positions 407 and 414 each coordinate Mg(2+).

It belongs to the class-II aminoacyl-tRNA synthetase family. In terms of assembly, homodimer. Requires Mg(2+) as cofactor.

The protein resides in the cytoplasm. It carries out the reaction tRNA(Lys) + L-lysine + ATP = L-lysyl-tRNA(Lys) + AMP + diphosphate. This Azobacteroides pseudotrichonymphae genomovar. CFP2 protein is Lysine--tRNA ligase.